Reading from the N-terminus, the 101-residue chain is Olivetolic acid cyclase (101 aa).

In terms of domain architecture, Stress-response A/B barrel spans 3 to 97; sequence VKHLIVLKFK…FWEKLLIFDY (95 aa). His5 lines the 3,5,7-trioxododecanoyl-CoA pocket. Mg(2+) contacts are provided by Val31, Ile34, and Met37. Tyr72 is a binding site for 3,5,7-trioxododecanoyl-CoA. Catalysis depends on acid/base catalyst residues Tyr72 and His75.

Homodimer. Expressed in glandular trichomes and at lower levels in female flowers.

Its subcellular location is the cytoplasm. It carries out the reaction 3,5,7-trioxododecanoyl-CoA = olivetolate + CoA + H(+). It functions in the pathway secondary metabolite biosynthesis; terpenoid biosynthesis. Functionally, involved in the biosynthesis of cannabinoids-related terpenophenolic natural products, which have pharmacological activity. Polyketide cyclase which functions in concert with OLS/TKS to form olivetolic acid. Has no intrinsic polyketide synthase activity and requires the presence of OLS to produce olivetolic acid. This Cannabis sativa (Hemp) protein is Olivetolic acid cyclase.